The sequence spans 86 residues: Weak toxin 1 (86 aa).

The N-terminal stretch at 1-23 is a signal peptide; sequence MKTLLLTLVVVAIVCLDLGYTLT. 5 cysteine pairs are disulfide-bonded: Cys24–Cys45, Cys27–Cys32, Cys38–Cys63, Cys67–Cys78, and Cys79–Cys84.

The protein belongs to the three-finger toxin family. Ancestral subfamily. Orphan group II sub-subfamily. Expressed by the venom gland.

The protein localises to the secreted. Its function is as follows. Binds with low affinity to muscular (alpha-1-beta-1-delta-epsilon/CHRNA1-CHRNB1-CHRND-CHRNE) and very low affinity to neuronal (alpha-7/CHRNA7) nicotinic acetylcholine receptor (nAChR). This Bungarus candidus (Malayan krait) protein is Weak toxin 1.